Consider the following 141-residue polypeptide: Nucleoside diphosphate kinase (141 aa).

Lysine 9, phenylalanine 57, arginine 85, threonine 91, arginine 102, and asparagine 112 together coordinate ATP. The Pros-phosphohistidine intermediate role is filled by histidine 115.

The protein belongs to the NDK family. As to quaternary structure, homotetramer. The cofactor is Mg(2+).

The protein localises to the cytoplasm. The enzyme catalyses a 2'-deoxyribonucleoside 5'-diphosphate + ATP = a 2'-deoxyribonucleoside 5'-triphosphate + ADP. It catalyses the reaction a ribonucleoside 5'-diphosphate + ATP = a ribonucleoside 5'-triphosphate + ADP. Its function is as follows. Major role in the synthesis of nucleoside triphosphates other than ATP. The ATP gamma phosphate is transferred to the NDP beta phosphate via a ping-pong mechanism, using a phosphorylated active-site intermediate. This Chlamydia trachomatis serovar D (strain ATCC VR-885 / DSM 19411 / UW-3/Cx) protein is Nucleoside diphosphate kinase.